Here is an 87-residue protein sequence, read N- to C-terminus: Cell division topological specificity factor (87 aa).

The protein belongs to the MinE family.

Prevents the cell division inhibition by proteins MinC and MinD at internal division sites while permitting inhibition at polar sites. This ensures cell division at the proper site by restricting the formation of a division septum at the midpoint of the long axis of the cell. This chain is Cell division topological specificity factor, found in Roseiflexus sp. (strain RS-1).